The following is a 248-amino-acid chain: Transcription factor bHLH35 (248 aa).

The span at 37–54 (SGSYDSSSPDGAASSPAS) shows a compositional bias: low complexity. A disordered region spans residues 37-60 (SGSYDSSSPDGAASSPASKNIVSE). The 50-residue stretch at 51–100 (SPASKNIVSERNRRQKLNQRLFALRSVVPNITKMDKASIIKDAISYIEGL) folds into the bHLH domain.

In terms of assembly, homodimer. In terms of tissue distribution, expressed constitutively in roots, leaves, stems, and flowers.

The protein resides in the nucleus. This Arabidopsis thaliana (Mouse-ear cress) protein is Transcription factor bHLH35 (BHLH35).